The following is a 208-amino-acid chain: Ribosomal RNA small subunit methyltransferase G (208 aa).

S-adenosyl-L-methionine is bound by residues Gly74, Leu79, Val125–Glu126, and Arg140.

This sequence belongs to the methyltransferase superfamily. RNA methyltransferase RsmG family.

The protein resides in the cytoplasm. The catalysed reaction is guanosine(527) in 16S rRNA + S-adenosyl-L-methionine = N(7)-methylguanosine(527) in 16S rRNA + S-adenosyl-L-homocysteine. Specifically methylates the N7 position of guanine in position 527 of 16S rRNA. The sequence is that of Ribosomal RNA small subunit methyltransferase G from Shewanella denitrificans (strain OS217 / ATCC BAA-1090 / DSM 15013).